The sequence spans 291 residues: 4,5:9,10-diseco-3-hydroxy-5,9,17-trioxoandrosta-1(10),2-diene-4-oate hydrolase (291 aa).

Residues G45–G46, N54, N113, L115, and R192 contribute to the substrate site. The active-site Proton acceptor is H269. W270 lines the substrate pocket.

It belongs to the AB hydrolase superfamily. HsaD family. Homodimer.

The enzyme catalyses (1E,2Z)-3-hydroxy-5,9,17-trioxo-4,5:9,10-disecoandrosta-1(10),2-dien-4-oate + H2O = 3-[(3aS,4S,7aS)-7a-methyl-1,5-dioxo-octahydro-1H-inden-4-yl]propanoate + (2Z,4Z)-2-hydroxyhexa-2,4-dienoate + H(+). The catalysed reaction is 2,6-dioxo-6-phenylhexa-3-enoate + H2O = 2-oxopent-4-enoate + benzoate + H(+). Its pathway is lipid metabolism; steroid biosynthesis. Its function is as follows. Catalyzes the hydrolysis of a carbon-carbon bond in 4,5: 9,10-diseco-3-hydroxy-5,9,17-trioxoandrosta-1(10),2-diene-4-oate (4,9-DSHA) to yield 9,17-dioxo-1,2,3,4,10,19-hexanorandrostan-5-oate (DOHNAA) and 2-hydroxy-hexa-2,4-dienoate (HHD). Is also able to catalyze the hydrolysis of 2-hydroxy-6-oxo-6-phenylhexa-2,4-dienoic acid (HOPDA) and the synthetic analog 8-(2-chlorophenyl)-2-hydroxy-5-methyl-6-oxoocta-2,4-dienoic acid (HOPODA). This chain is 4,5:9,10-diseco-3-hydroxy-5,9,17-trioxoandrosta-1(10),2-diene-4-oate hydrolase (hsaD), found in Mycobacterium tuberculosis (strain ATCC 25618 / H37Rv).